The sequence spans 579 residues: Arginine--tRNA ligase (579 aa).

Residues 123-133 (PNLAKEMHVGH) carry the 'HIGH' region motif.

This sequence belongs to the class-I aminoacyl-tRNA synthetase family. Monomer.

It is found in the cytoplasm. It catalyses the reaction tRNA(Arg) + L-arginine + ATP = L-arginyl-tRNA(Arg) + AMP + diphosphate. The chain is Arginine--tRNA ligase from Saccharophagus degradans (strain 2-40 / ATCC 43961 / DSM 17024).